The primary structure comprises 264 residues: 1-(5-phosphoribosyl)-5-[(5-phosphoribosylamino)methylideneamino] imidazole-4-carboxamide isomerase (264 aa).

It belongs to the HisA/HisF family.

The protein localises to the cytoplasm. The catalysed reaction is 1-(5-phospho-beta-D-ribosyl)-5-[(5-phospho-beta-D-ribosylamino)methylideneamino]imidazole-4-carboxamide = 5-[(5-phospho-1-deoxy-D-ribulos-1-ylimino)methylamino]-1-(5-phospho-beta-D-ribosyl)imidazole-4-carboxamide. The protein operates within amino-acid biosynthesis; L-histidine biosynthesis; L-histidine from 5-phospho-alpha-D-ribose 1-diphosphate: step 4/9. This Yarrowia lipolytica (strain CLIB 122 / E 150) (Yeast) protein is 1-(5-phosphoribosyl)-5-[(5-phosphoribosylamino)methylideneamino] imidazole-4-carboxamide isomerase (HIS6).